The sequence spans 422 residues: D-amino acid dehydrogenase (422 aa).

An FAD-binding site is contributed by Val-3–Trp-17.

This sequence belongs to the DadA oxidoreductase family. The cofactor is FAD.

It catalyses the reaction a D-alpha-amino acid + A + H2O = a 2-oxocarboxylate + AH2 + NH4(+). It participates in amino-acid degradation; D-alanine degradation; NH(3) and pyruvate from D-alanine: step 1/1. Functionally, oxidative deamination of D-amino acids. The chain is D-amino acid dehydrogenase from Paramagnetospirillum magneticum (strain ATCC 700264 / AMB-1) (Magnetospirillum magneticum).